We begin with the raw amino-acid sequence, 178 residues long: Large ribosomal subunit protein uL6 (178 aa).

The protein belongs to the universal ribosomal protein uL6 family. In terms of assembly, part of the 50S ribosomal subunit.

This protein binds to the 23S rRNA, and is important in its secondary structure. It is located near the subunit interface in the base of the L7/L12 stalk, and near the tRNA binding site of the peptidyltransferase center. This chain is Large ribosomal subunit protein uL6, found in Shouchella clausii (strain KSM-K16) (Alkalihalobacillus clausii).